The sequence spans 239 residues: Orotidine 5'-phosphate decarboxylase (239 aa).

Substrate contacts are provided by residues Asp15, Lys37, 64 to 73, Thr126, Arg187, Gln196, Gly216, and Arg217; that span reads DLKFHDIPNT. Catalysis depends on Lys66, which acts as the Proton donor.

Belongs to the OMP decarboxylase family. Type 1 subfamily. In terms of assembly, homodimer.

The enzyme catalyses orotidine 5'-phosphate + H(+) = UMP + CO2. It participates in pyrimidine metabolism; UMP biosynthesis via de novo pathway; UMP from orotate: step 2/2. Its function is as follows. Catalyzes the decarboxylation of orotidine 5'-monophosphate (OMP) to uridine 5'-monophosphate (UMP). The protein is Orotidine 5'-phosphate decarboxylase of Geobacter sulfurreducens (strain ATCC 51573 / DSM 12127 / PCA).